The chain runs to 398 residues: GTPase Obg (398 aa).

Residues 1–159 (MKFVDEAPIS…RNLKLELKVL (159 aa)) enclose the Obg domain. Residues 128–148 (TRFKSSTNRVPRKTTPGTEGE) are disordered. The 174-residue stretch at 160–333 (ADVGMLGLPN…LSGKIMDHLE (174 aa)) folds into the OBG-type G domain. GTP contacts are provided by residues 166–173 (GLPNAGKS), 191–195 (FTTLV), 213–216 (DIPG), 283–286 (NKID), and 314–316 (SAL). Mg(2+) contacts are provided by S173 and T193.

This sequence belongs to the TRAFAC class OBG-HflX-like GTPase superfamily. OBG GTPase family. Monomer. Requires Mg(2+) as cofactor.

The protein resides in the cytoplasm. Its function is as follows. An essential GTPase which binds GTP, GDP and possibly (p)ppGpp with moderate affinity, with high nucleotide exchange rates and a fairly low GTP hydrolysis rate. Plays a role in control of the cell cycle, stress response, ribosome biogenesis and in those bacteria that undergo differentiation, in morphogenesis control. The chain is GTPase Obg from Cellvibrio japonicus (strain Ueda107) (Pseudomonas fluorescens subsp. cellulosa).